The sequence spans 437 residues: Enolase (437 aa).

Glutamine 162 is a (2R)-2-phosphoglycerate binding site. The active-site Proton donor is the glutamate 204. Mg(2+) contacts are provided by aspartate 251, glutamate 297, and aspartate 324. The (2R)-2-phosphoglycerate site is built by lysine 349, arginine 378, serine 379, and lysine 400. Catalysis depends on lysine 349, which acts as the Proton acceptor.

It belongs to the enolase family. Mg(2+) is required as a cofactor.

The protein resides in the cytoplasm. It localises to the secreted. The protein localises to the cell surface. The enzyme catalyses (2R)-2-phosphoglycerate = phosphoenolpyruvate + H2O. Its pathway is carbohydrate degradation; glycolysis; pyruvate from D-glyceraldehyde 3-phosphate: step 4/5. Its function is as follows. Catalyzes the reversible conversion of 2-phosphoglycerate (2-PG) into phosphoenolpyruvate (PEP). It is essential for the degradation of carbohydrates via glycolysis. In Chlorobium luteolum (strain DSM 273 / BCRC 81028 / 2530) (Pelodictyon luteolum), this protein is Enolase.